A 2470-amino-acid polypeptide reads, in one-letter code: Serine/threonine-protein kinase mTor (2470 aa).

HEAT repeat units lie at residues Q172–Q209, S746–G785, L791–R829, H835–Y873, P962–L999, D1043–T1080, Y1083–F1122, and D1124–K1160. The 555-residue stretch at L1349–S1903 folds into the FAT domain. TPR repeat units lie at residues A1407 to D1440 and M1718 to W1751. An HEAT 9 repeat occupies N1854–Q1891. A PI3K/PI4K catalytic domain is found at I2077–L2389. The segment at V2083–R2089 is G-loop. The segment at G2256–N2264 is catalytic loop. An activation loop region spans residues H2276–T2301. Residues A2364–L2389 are disordered. The span at G2367–G2376 shows a compositional bias: gly residues. The span at M2377 to E2386 shows a compositional bias: polar residues. Positions K2438 to W2470 constitute an FATC domain.

The protein belongs to the PI3/PI4-kinase family. In terms of assembly, may be part of a minimal complex, TORC1, consisting of mTor, raptor and lst8. May be part of a minimal complex, TORC2, consisting of mTor, rictor and lst8. Self-associates; assembles into homomultimeric complexes. Component of a multiprotein complex.

The enzyme catalyses L-seryl-[protein] + ATP = O-phospho-L-seryl-[protein] + ADP + H(+). The catalysed reaction is L-threonyl-[protein] + ATP = O-phospho-L-threonyl-[protein] + ADP + H(+). Its function is as follows. Promotes cell and tissue growth, maintains tissue homeostatis and controls responses to environmental stress and aging. Regulates growth during animal development by coupling growth factor signaling to nutrient availability. Central regulators of autophagy. May be involved in atg1 phosphorylation. May also be involved, directly or indirectly, in the control of neuronal function. Phosphorylates S6K/p70S6K, in vitro. May regulate the activity of S6K. Overexpression inhibits growth and reduces cell size. Affects the timing of neuronal cell differentiation. Hyperactivation of the signaling leads to accelerated differentiation, whereas inhibition of the signaling retards differentiation. Thus, in addition to controlling growth of the cell in which it resides, it can also influence growth of distant cells and organs during development via a humoral mechanism. As part of the TORC1 complex regulates energy homeostasis and promotes certain aspects of larval growth by negatively regulating REPTOR. REPTOR functions downstream of TORC1 to regulate the expression of stress response genes in response to TORC1 inhibition resulting from nutrient deprivation. When TORC1 activity is high it phosphorylates REPTOR which inhibits its recruitment into the nucleus and antagonizes their function. This function is essential under normal feeding conditions to promote TORC1-dependent growth during larval development and, in adults and larvae to prevent the REPTOR-dependent expression of nutrient stress response genes. In short, during development, it primarily controls growth, whereas in the adult, where there is relatively little growth, it controls aging and other aspects of nutrient-related physiology. Rag GTPases act as activators of TORC1 in response to amino acid signals. The protein is Serine/threonine-protein kinase mTor of Drosophila melanogaster (Fruit fly).